Here is a 234-residue protein sequence, read N- to C-terminus: UPF0173 metal-dependent hydrolase RHECIAT_CH0001941 (234 aa).

The protein belongs to the UPF0173 family.

The chain is UPF0173 metal-dependent hydrolase RHECIAT_CH0001941 from Rhizobium etli (strain CIAT 652).